Consider the following 208-residue polypeptide: dTTP/UTP pyrophosphatase (208 aa).

The disordered stretch occupies residues aspartate 28–leucine 48. Aspartate 79 (proton acceptor) is an active-site residue.

The protein belongs to the Maf family. YhdE subfamily. The cofactor is a divalent metal cation.

It localises to the cytoplasm. The catalysed reaction is dTTP + H2O = dTMP + diphosphate + H(+). The enzyme catalyses UTP + H2O = UMP + diphosphate + H(+). Functionally, nucleoside triphosphate pyrophosphatase that hydrolyzes dTTP and UTP. May have a dual role in cell division arrest and in preventing the incorporation of modified nucleotides into cellular nucleic acids. The sequence is that of dTTP/UTP pyrophosphatase from Brucella abortus (strain 2308).